We begin with the raw amino-acid sequence, 626 residues long: MSSFDSAEGECNGLNQHYEKKVRPIIDLVDTLRALGVEKDLNLPAIAVIGDQSSGKSSVLEALSGVALPRGIGIVTRCPLILKLKKITRDKNWSGLLTYKDQTEILKEPTGIENAVLKAQIALAGTGEGISHEMITLEIQSCDVPDLTLIDLPGIARVATGNQPEDIEKQIKDLIEKFIKRQETISLVVVPANIDIATTEALKMASTVDPTGQRTLCILTKPDLVDRGMEDTVVRTVNNEVIRLEKGYMIVKCRGQQDINDKLNLVEALEKERRFFDEHPQFSSLLEDGKATIPLLGQRLTEELVEHIAKNVPRLQNQIEMKLQKTFERLKVLGESVPDDDEIELNNFLIKKLRQFMDALEEVKRVEEEPVKSDTRVFSKIRQEFVSWKHILDSKPIKMSTDLQEYVRTHRGKELPGFLNYGTFAGIIRMHVEDLEEPALKLLRNAKDIVHSSVGSIANIHFNGYPNLLLAVKEPIEKCLHEQFQNAEEKIRSQFKLEKTVYCQDDLYTNHLNLLRPKNTVRFGLEASLGNSELRETAFHLTSYLTIACERLANQIPLIVQYHMMNEYNSQLQNAMLGLIGTSDPGMLLCEDSGVARIRKDLKERLERLKDARRALPKVVHSANSW.

A Dynamin-type G domain is found at 40 to 313 (DLNLPAIAVI…LVEHIAKNVP (274 aa)). The segment at 50–57 (GDQSSGKS) is G1 motif. 50-57 (GDQSSGKS) contacts GTP. Residues 75–77 (VTR) are G2 motif. The tract at residues 151–154 (DLPG) is G3 motif. GTP is bound by residues 151 to 155 (DLPGI) and 220 to 223 (TKPD). Residues 220-223 (TKPD) are G4 motif. The tract at residues 252–255 (KCRG) is G5 motif. In terms of domain architecture, GED spans 534–624 (LRETAFHLTS…ALPKVVHSAN (91 aa)).

It belongs to the TRAFAC class dynamin-like GTPase superfamily. Dynamin/Fzo/YdjA family.

It localises to the cytoplasm. This Danio rerio (Zebrafish) protein is Interferon-induced GTP-binding protein MxC (mxc).